A 296-amino-acid polypeptide reads, in one-letter code: Elongation factor Ts (296 aa).

An involved in Mg(2+) ion dislocation from EF-Tu region spans residues 82–85 (TDFV).

The protein belongs to the EF-Ts family.

Its subcellular location is the cytoplasm. Associates with the EF-Tu.GDP complex and induces the exchange of GDP to GTP. It remains bound to the aminoacyl-tRNA.EF-Tu.GTP complex up to the GTP hydrolysis stage on the ribosome. This Coxiella burnetii (strain CbuG_Q212) (Coxiella burnetii (strain Q212)) protein is Elongation factor Ts.